Reading from the N-terminus, the 251-residue chain is RING-H2 finger protein ATL10 (251 aa).

Residues 59 to 79 (MMLLSILICGIICCLGLHYII) traverse the membrane as a helical segment. An RING-type; atypical zinc finger spans residues 135–177 (CVICLSDFVSGEQLRLLPKCNHGFHVRCIDKWLQQHLTCPKCR).

This sequence belongs to the RING-type zinc finger family. ATL subfamily.

The protein resides in the membrane. The enzyme catalyses S-ubiquitinyl-[E2 ubiquitin-conjugating enzyme]-L-cysteine + [acceptor protein]-L-lysine = [E2 ubiquitin-conjugating enzyme]-L-cysteine + N(6)-ubiquitinyl-[acceptor protein]-L-lysine.. Its pathway is protein modification; protein ubiquitination. This is RING-H2 finger protein ATL10 (ATL10) from Arabidopsis thaliana (Mouse-ear cress).